Here is a 269-residue protein sequence, read N- to C-terminus: Type III pantothenate kinase (269 aa).

An ATP-binding site is contributed by 9 to 16 (DVGNTSVK). Residues Tyr106 and 113 to 116 (GADR) each bind substrate. Asp115 serves as the catalytic Proton acceptor. Asp137 lines the K(+) pocket. Residue Thr140 coordinates ATP. Thr193 provides a ligand contact to substrate.

The protein belongs to the type III pantothenate kinase family. Homodimer. The cofactor is NH4(+). K(+) is required as a cofactor.

The protein localises to the cytoplasm. The enzyme catalyses (R)-pantothenate + ATP = (R)-4'-phosphopantothenate + ADP + H(+). The protein operates within cofactor biosynthesis; coenzyme A biosynthesis; CoA from (R)-pantothenate: step 1/5. Functionally, catalyzes the phosphorylation of pantothenate (Pan), the first step in CoA biosynthesis. The sequence is that of Type III pantothenate kinase from Lawsonia intracellularis (strain PHE/MN1-00).